Reading from the N-terminus, the 326-residue chain is Ras association domain-containing protein 2 (326 aa).

Positions 111 to 133 (EVDAPPEGDQMPSSTDSRGLKPL) are disordered. The region spanning 176 to 264 (YNHKTSVFTP…SKVFLMEKDQ (89 aa)) is the Ras-associating domain. The SARAH domain maps to 272 to 319 (VAQYIKFEMPVLKSFIQKLQEEEDREVKKLMRKYTVLRLMIRQRLEEI).

Interacts directly with activated KRAS in a GTP-dependent manner. Interacts (via SARAH domain) with STK3/MST2 and STK4/MST1. Phosphorylated by STK3/MST2 and STK4/MST1. Widely expressed with highest levels in brain, placenta, peripheral blood and lung. Frequently down-regulated in lung tumor cell lines.

It is found in the nucleus. The protein resides in the cytoplasm. Its subcellular location is the chromosome. The protein localises to the centromere. It localises to the kinetochore. Functionally, potential tumor suppressor. Acts as a KRAS-specific effector protein. May promote apoptosis and cell cycle arrest. Stabilizes STK3/MST2 by protecting it from proteasomal degradation. This is Ras association domain-containing protein 2 (RASSF2) from Homo sapiens (Human).